Here is a 457-residue protein sequence, read N- to C-terminus: Heme sensor protein HssS (457 aa).

Transmembrane regions (helical) follow at residues 9–29 and 164–184; these read IAIY…VLTN and TFLA…VIAS. Residues 186–238 enclose the HAMP domain; that stretch reads YSIIRPVKKLKLATERLIDGDFETPIKQTRKDEIGTLQYHFNKMRESLGQVDQ. The region spanning 246 to 456 is the Histidine kinase domain; the sequence is NVSHEIKTPL…TFTITLPNNS (211 aa). Residue H249 is modified to Phosphohistidine; by autocatalysis.

In terms of processing, autophosphorylated.

It localises to the cell membrane. The enzyme catalyses ATP + protein L-histidine = ADP + protein N-phospho-L-histidine.. Its function is as follows. Member of the two-component regulatory system HssS/HssR involved in intracellular heme homeostasis and tempering of staphylococcal virulence. HssS functions as a heme sensor histidine kinase which is autophosphorylated at a histidine residue and transfers its phosphate group to an aspartate residue of HssR. HssR/HssS activates the expression of hrtAB, an efflux pump, in response to extracellular heme, hemin, hemoglobin or blood. This Staphylococcus aureus (strain Mu3 / ATCC 700698) protein is Heme sensor protein HssS (hssS).